A 270-amino-acid polypeptide reads, in one-letter code: DNA-directed RNA polymerase subunit Rpo3 (270 aa).

Residues C206, C209, and C212 each contribute to the [3Fe-4S] cluster site.

This sequence belongs to the archaeal Rpo3/eukaryotic RPB3 RNA polymerase subunit family. As to quaternary structure, part of the RNA polymerase complex. [3Fe-4S] cluster serves as cofactor.

Its subcellular location is the cytoplasm. The catalysed reaction is RNA(n) + a ribonucleoside 5'-triphosphate = RNA(n+1) + diphosphate. Functionally, DNA-dependent RNA polymerase (RNAP) catalyzes the transcription of DNA into RNA using the four ribonucleoside triphosphates as substrates. This chain is DNA-directed RNA polymerase subunit Rpo3, found in Methanosphaera stadtmanae (strain ATCC 43021 / DSM 3091 / JCM 11832 / MCB-3).